The following is a 320-amino-acid chain: Malate dehydrogenase (320 aa).

NAD(+) is bound by residues glycine 10–glycine 15 and aspartate 34. Positions 83 and 89 each coordinate substrate. Residues asparagine 96 and isoleucine 119–asparagine 121 each bind NAD(+). Substrate-binding residues include asparagine 121 and arginine 152. Histidine 176 serves as the catalytic Proton acceptor.

Belongs to the LDH/MDH superfamily. MDH type 3 family.

It catalyses the reaction (S)-malate + NAD(+) = oxaloacetate + NADH + H(+). Catalyzes the reversible oxidation of malate to oxaloacetate. This chain is Malate dehydrogenase, found in Beijerinckia indica subsp. indica (strain ATCC 9039 / DSM 1715 / NCIMB 8712).